The primary structure comprises 330 residues: Putative [LysW]-L-2-aminoadipate/[LysW]-L-glutamate phosphate reductase (330 aa).

NADP(+) is bound by residues 10 to 13 and 34 to 36; these read SGYI and SRK. Residue cysteine 142 is part of the active site. NADP(+) is bound at residue asparagine 297.

It belongs to the NAGSA dehydrogenase family. Type 1 subfamily. LysY sub-subfamily.

Its subcellular location is the cytoplasm. The catalysed reaction is [amino-group carrier protein]-C-terminal-N-(1-carboxy-5-oxopentan-1-yl)-L-glutamine + phosphate + NADP(+) = [amino-group carrier protein]-C-terminal-N-(1-carboxy-5-phosphooxy-5-oxopentan-1-yl)-L-glutamine + NADPH + H(+). It carries out the reaction [amino-group carrier protein]-C-terminal-gamma-(L-glutamyl-5-semialdehyde)-L-glutamate + phosphate + NADP(+) = [amino-group carrier protein]-C-terminal-gamma-(5-phospho-L-glutamyl)-L-glutamate + NADPH + H(+). The protein operates within amino-acid biosynthesis; L-lysine biosynthesis via AAA pathway; L-lysine from L-alpha-aminoadipate (Thermus route): step 3/5. It functions in the pathway amino-acid biosynthesis; L-arginine biosynthesis. Involved in both the arginine and lysine biosynthetic pathways. This Pyrococcus abyssi (strain GE5 / Orsay) protein is Putative [LysW]-L-2-aminoadipate/[LysW]-L-glutamate phosphate reductase.